Here is a 282-residue protein sequence, read N- to C-terminus: NADPH-dependent 7-cyano-7-deazaguanine reductase (282 aa).

Residue 88–90 participates in substrate binding; that stretch reads IES. Residue 90-91 participates in NADPH binding; the sequence is SK. Cysteine 190 acts as the Thioimide intermediate in catalysis. Aspartate 197 functions as the Proton donor in the catalytic mechanism. 229 to 230 lines the substrate pocket; the sequence is HE. 258–259 lines the NADPH pocket; that stretch reads RG.

It belongs to the GTP cyclohydrolase I family. QueF type 2 subfamily. As to quaternary structure, homodimer.

It is found in the cytoplasm. It catalyses the reaction 7-aminomethyl-7-carbaguanine + 2 NADP(+) = 7-cyano-7-deazaguanine + 2 NADPH + 3 H(+). The protein operates within tRNA modification; tRNA-queuosine biosynthesis. In terms of biological role, catalyzes the NADPH-dependent reduction of 7-cyano-7-deazaguanine (preQ0) to 7-aminomethyl-7-deazaguanine (preQ1). In Salmonella heidelberg (strain SL476), this protein is NADPH-dependent 7-cyano-7-deazaguanine reductase.